A 356-amino-acid chain; its full sequence is Glutamine synthetase (356 aa).

Residues 19 to 99 (IIAEYIWIGG…VMCDCYTPRG (81 aa)) enclose the GS beta-grasp domain. One can recognise a GS catalytic domain in the interval 106–356 (KRYNAAKILS…IAQTTILWKP (251 aa)).

Belongs to the glutamine synthetase family. Homooctamer.

It localises to the cytoplasm. The enzyme catalyses L-glutamate + NH4(+) + ATP = L-glutamine + ADP + phosphate + H(+). This chain is Glutamine synthetase, found in Hordeum vulgare (Barley).